Reading from the N-terminus, the 223-residue chain is 2-C-methyl-D-erythritol 4-phosphate cytidylyltransferase (223 aa).

It belongs to the IspD/TarI cytidylyltransferase family. IspD subfamily.

It carries out the reaction 2-C-methyl-D-erythritol 4-phosphate + CTP + H(+) = 4-CDP-2-C-methyl-D-erythritol + diphosphate. It participates in isoprenoid biosynthesis; isopentenyl diphosphate biosynthesis via DXP pathway; isopentenyl diphosphate from 1-deoxy-D-xylulose 5-phosphate: step 2/6. Its function is as follows. Catalyzes the formation of 4-diphosphocytidyl-2-C-methyl-D-erythritol from CTP and 2-C-methyl-D-erythritol 4-phosphate (MEP). The polypeptide is 2-C-methyl-D-erythritol 4-phosphate cytidylyltransferase (Prochlorococcus marinus (strain MIT 9515)).